Consider the following 174-residue polypeptide: Translation initiation factor IF-3 (174 aa).

Belongs to the IF-3 family. In terms of assembly, monomer.

The protein resides in the cytoplasm. In terms of biological role, IF-3 binds to the 30S ribosomal subunit and shifts the equilibrium between 70S ribosomes and their 50S and 30S subunits in favor of the free subunits, thus enhancing the availability of 30S subunits on which protein synthesis initiation begins. This is Translation initiation factor IF-3 from Helicobacter hepaticus (strain ATCC 51449 / 3B1).